A 765-amino-acid chain; its full sequence is 5-methyltetrahydropteroyltriglutamate--homocysteine methyltransferase 1 (765 aa).

5-methyltetrahydropteroyltri-L-glutamate contacts are provided by Lys18 and Asn116. Position 437-439 (437-439 (IGS)) interacts with L-homocysteine. L-methionine-binding positions include 437–439 (IGS) and Glu490. Residues 521 to 522 (RC) and Trp567 each bind 5-methyltetrahydropteroyltri-L-glutamate. L-homocysteine is bound at residue Asp605. Asp605 lines the L-methionine pocket. Zn(2+) is bound by residues His647, Cys649, His658, Asp662, and Glu671. His701 serves as the catalytic Proton donor. Cys733 provides a ligand contact to Zn(2+).

The protein belongs to the vitamin-B12 independent methionine synthase family. Requires Zn(2+) as cofactor. In terms of tissue distribution, expressed in leaves, stems, flowers, siliques and seeds.

It localises to the cytoplasm. The protein localises to the cytosol. It carries out the reaction 5-methyltetrahydropteroyltri-L-glutamate + L-homocysteine = tetrahydropteroyltri-L-glutamate + L-methionine. The protein operates within amino-acid biosynthesis; L-methionine biosynthesis via de novo pathway; L-methionine from L-homocysteine (MetE route): step 1/1. Functionally, catalyzes the transfer of a methyl group from 5-methyltetrahydrofolate to homocysteine resulting in methionine formation. This is 5-methyltetrahydropteroyltriglutamate--homocysteine methyltransferase 1 (MS1) from Arabidopsis thaliana (Mouse-ear cress).